The chain runs to 1418 residues: Chromatin remodeling factor mit1 (1418 aa).

The segment covering 135–148 has biased composition (low complexity); it reads DETASDSATSSSSD. A disordered region spans residues 135–156; sequence DETASDSATSSSSDTNKKVNRK. A PHD-type zinc finger spans residues 212 to 271; that stretch reads VCVCVKCHGREHRSSGKNFVYCDHCSNVYHYDCSPLPSLNKETRNYSQQNGFICPLCSKN. The RING-type; atypical zinc-finger motif lies at 215 to 269; the sequence is CVKCHGREHRSSGKNFVYCDHCSNVYHYDCSPLPSLNKETRNYSQQNGFICPLCS. Residues 568–738 form the Helicase ATP-binding domain; it reads YLRWYTHHPC…FNLLQFLNPM (171 aa). 581–588 lines the ATP pocket; that stretch reads DEMGLGKT. The region spanning 875 to 1034 is the Helicase C-terminal domain; sequence ILRLLVPKLI…QNHNSEKDLE (160 aa).

The protein belongs to the SNF2/RAD54 helicase family. As to quaternary structure, interacts with clr3.

The protein localises to the nucleus. Its subcellular location is the chromosome. The protein resides in the centromere. It localises to the telomere. Its function is as follows. Required for proper positioning of nucleosomes at heterochromatic loci and for transcriptional gene silencing (TGS) function of the Snf2/Hdac-containing repressor complex (SHREC). The protein is Chromatin remodeling factor mit1 (mit1) of Schizosaccharomyces pombe (strain 972 / ATCC 24843) (Fission yeast).